The sequence spans 79 residues: uncharacterized protein (79 aa).

The signal sequence occupies residues 1 to 24 (MKMNPCTVILCKSLFFFCLFQVDC). The N-linked (GlcNAc...) asparagine glycan is linked to N33.

It is found in the secreted. This is an uncharacterized protein from Saccharomyces cerevisiae (strain ATCC 204508 / S288c) (Baker's yeast).